The primary structure comprises 371 residues: Probable beta-1,4-xylosyltransferase GT43A (371 aa).

The Cytoplasmic portion of the chain corresponds to 1–19 (MGTAAVAAAERPKQRRSSH). The helical; Signal-anchor for type II membrane protein transmembrane segment at 20-42 (LWKKALLHFSLCFVMGFFTGFAP) threads the bilayer. Residues 43–371 (SSSSSWRAGS…TSTPKTHNRR (329 aa)) lie on the Lumenal side of the membrane. N-linked (GlcNAc...) asparagine glycosylation is found at asparagine 176 and asparagine 299.

The protein belongs to the glycosyltransferase 43 family.

The protein localises to the golgi apparatus membrane. In terms of biological role, probable beta-1,4-xylosyltransferase involved in xylan biosynthesis in cell walls. The chain is Probable beta-1,4-xylosyltransferase GT43A from Oryza sativa subsp. japonica (Rice).